We begin with the raw amino-acid sequence, 408 residues long: NADH-quinone oxidoreductase subunit D (408 aa).

This sequence belongs to the complex I 49 kDa subunit family. In terms of assembly, NDH-1 is composed of 14 different subunits. Subunits NuoB, C, D, E, F, and G constitute the peripheral sector of the complex.

It localises to the cell inner membrane. The catalysed reaction is a quinone + NADH + 5 H(+)(in) = a quinol + NAD(+) + 4 H(+)(out). Functionally, NDH-1 shuttles electrons from NADH, via FMN and iron-sulfur (Fe-S) centers, to quinones in the respiratory chain. The immediate electron acceptor for the enzyme in this species is believed to be ubiquinone. Couples the redox reaction to proton translocation (for every two electrons transferred, four hydrogen ions are translocated across the cytoplasmic membrane), and thus conserves the redox energy in a proton gradient. In Campylobacter hominis (strain ATCC BAA-381 / DSM 21671 / CCUG 45161 / LMG 19568 / NCTC 13146 / CH001A), this protein is NADH-quinone oxidoreductase subunit D.